The chain runs to 1234 residues: Formin-like protein 3 (1234 aa).

The region spanning 1-208 (MRLDSFPASI…QYVARRNISP (208 aa)) is the Phosphatase tensin-type domain. C141 functions as the Phosphocysteine intermediate in the catalytic mechanism. Residues 214–352 (ERALSFDCLI…FRAEMLFCEL (139 aa)) enclose the C2 tensin-type domain. 2 disordered regions span residues 443–478 (DSDE…NINH) and 492–840 (LVNT…LKPL). A compositionally biased stretch (pro residues) spans 498 to 507 (VLPPTTPPPC). Residues 524–534 (VQHESPSDRKL) are compositionally biased toward basic and acidic residues. Pro residues-rich tracts occupy residues 536–576 (SPSP…PPLP), 584–656 (QPPP…PPAP), 663–673 (PAPPPPPPPPR), 688–699 (GPPPPPPPPLPP), 709–721 (PSAP…PPPA), 729–739 (APAPPLPPPLP), and 762–784 (PAPP…PPPL). Residues 827 to 1226 (QQSNPPKKAS…KLEKDKEKAT (400 aa)) form the FH2 domain.

The protein belongs to the formin-like family. Class-II subfamily.

The sequence is that of Formin-like protein 3 (FH3) from Oryza sativa subsp. japonica (Rice).